Consider the following 256-residue polypeptide: Deoxyribose-phosphate aldolase (256 aa).

The Proton donor/acceptor role is filled by Asp102. Lys165 serves as the catalytic Schiff-base intermediate with acetaldehyde. The active-site Proton donor/acceptor is the Lys197.

Belongs to the DeoC/FbaB aldolase family. DeoC type 2 subfamily.

It localises to the cytoplasm. The enzyme catalyses 2-deoxy-D-ribose 5-phosphate = D-glyceraldehyde 3-phosphate + acetaldehyde. It functions in the pathway carbohydrate degradation; 2-deoxy-D-ribose 1-phosphate degradation; D-glyceraldehyde 3-phosphate and acetaldehyde from 2-deoxy-alpha-D-ribose 1-phosphate: step 2/2. Functionally, catalyzes a reversible aldol reaction between acetaldehyde and D-glyceraldehyde 3-phosphate to generate 2-deoxy-D-ribose 5-phosphate. This chain is Deoxyribose-phosphate aldolase, found in Shewanella sp. (strain MR-7).